Reading from the N-terminus, the 235-residue chain is Probable queuosine precursor transporter (235 aa).

Helical transmembrane passes span 17–37, 56–76, 87–107, 127–147, 155–175, and 201–221; these read IIWLSFFHIFIIAASNYFVQI, FHSTWGTLTFPFIFLATDLTV, IIFVVMFPALIVSYVISVLFS, IAIASFAAYVVGQLLDVIVFN, WWVAPTSSMTFGSMADTFVFF, and FKLFIGIILFVPAYGVVLNVI.

Belongs to the vitamin uptake transporter (VUT/ECF) (TC 2.A.88) family. Q precursor transporter subfamily.

The protein localises to the cell inner membrane. Involved in the import of queuosine (Q) precursors, required for Q precursor salvage. The chain is Probable queuosine precursor transporter from Haemophilus influenzae (strain ATCC 51907 / DSM 11121 / KW20 / Rd).